A 157-amino-acid polypeptide reads, in one-letter code: Putative pre-16S rRNA nuclease (157 aa).

This sequence belongs to the YqgF nuclease family.

Its subcellular location is the cytoplasm. Could be a nuclease involved in processing of the 5'-end of pre-16S rRNA. The protein is Putative pre-16S rRNA nuclease of Nitrosomonas eutropha (strain DSM 101675 / C91 / Nm57).